We begin with the raw amino-acid sequence, 526 residues long: Probable lipid II flippase MurJ (526 aa).

14 consecutive transmembrane segments (helical) span residues 35–55 (LMGT…PNLF), 58–78 (LFAE…HYSM), 96–116 (AIFT…ILGA), 137–157 (MFPY…LHSI), 160–180 (FVPS…SMYF), 190–210 (IAAA…QLIF), 235–255 (IIAL…NDLV), 281–301 (LLGI…SFHV), 313–333 (LITA…FVLF), 362–382 (WHSV…AFYA), 391–411 (IAGT…FIPL), 415–435 (GIAF…WMFL), 459–479 (LFSV…AYFF), and 489–509 (GVPL…LLLL).

Belongs to the MurJ/MviN family.

The protein resides in the cell inner membrane. It functions in the pathway cell wall biogenesis; peptidoglycan biosynthesis. Functionally, involved in peptidoglycan biosynthesis. Transports lipid-linked peptidoglycan precursors from the inner to the outer leaflet of the cytoplasmic membrane. This is Probable lipid II flippase MurJ from Treponema pallidum (strain Nichols).